A 42-amino-acid polypeptide reads, in one-letter code: Photosystem I reaction center subunit IX (42 aa).

Residues 7–27 (YLSTAPVLATLWFGFLAGLLI) form a helical membrane-spanning segment.

Belongs to the PsaJ family.

The protein resides in the plastid. Its subcellular location is the chloroplast thylakoid membrane. May help in the organization of the PsaE and PsaF subunits. In Huperzia lucidula (Shining clubmoss), this protein is Photosystem I reaction center subunit IX.